Consider the following 308-residue polypeptide: Staphylococcal superantigen-like 4 (308 aa).

Residues 1–30 (MKITTIAKTSLALGLLTTGVITTTTQAANA) form the signal peptide. The tract at residues 28-117 (ANATTPSSTK…TTKQVPTEIN (90 aa)) is disordered. Polar residues-rich tracts occupy residues 33 to 47 (PSST…TPPS) and 55 to 76 (SKPN…TANA). Positions 77–93 (TTPPSTKVTTPPSTNTP) are enriched in low complexity. A compositionally biased stretch (polar residues) spans 94 to 114 (QPMQSTKSDTPQSPTTKQVPT). The segment at 180–278 (VDVFVVLEEN…VIKMKNGGKY (99 aa)) is sialyl Lewis X-binding.

The protein belongs to the staphylococcal/streptococcal toxin family.

It is found in the secreted. Secreted protein that plays a role in immune innate response inhibition by interfering with host TLR2-mediated pathway. The polypeptide is Staphylococcal superantigen-like 4 (Staphylococcus aureus (strain Newman)).